Consider the following 196-residue polypeptide: Orotate phosphoribosyltransferase (196 aa).

117-125 (EDVVTTGLS) lines the 5-phospho-alpha-D-ribose 1-diphosphate pocket. Orotate is bound by residues threonine 121 and arginine 149.

This sequence belongs to the purine/pyrimidine phosphoribosyltransferase family. PyrE subfamily. In terms of assembly, homodimer. Mg(2+) is required as a cofactor.

It carries out the reaction orotidine 5'-phosphate + diphosphate = orotate + 5-phospho-alpha-D-ribose 1-diphosphate. It functions in the pathway pyrimidine metabolism; UMP biosynthesis via de novo pathway; UMP from orotate: step 1/2. Catalyzes the transfer of a ribosyl phosphate group from 5-phosphoribose 1-diphosphate to orotate, leading to the formation of orotidine monophosphate (OMP). This Sphingopyxis alaskensis (strain DSM 13593 / LMG 18877 / RB2256) (Sphingomonas alaskensis) protein is Orotate phosphoribosyltransferase.